We begin with the raw amino-acid sequence, 194 residues long: ATP-dependent Clp protease proteolytic subunit (194 aa).

Residue Ser-97 is the Nucleophile of the active site. The active site involves His-122.

Belongs to the peptidase S14 family. As to quaternary structure, fourteen ClpP subunits assemble into 2 heptameric rings which stack back to back to give a disk-like structure with a central cavity, resembling the structure of eukaryotic proteasomes.

The protein resides in the cytoplasm. The enzyme catalyses Hydrolysis of proteins to small peptides in the presence of ATP and magnesium. alpha-casein is the usual test substrate. In the absence of ATP, only oligopeptides shorter than five residues are hydrolyzed (such as succinyl-Leu-Tyr-|-NHMec, and Leu-Tyr-Leu-|-Tyr-Trp, in which cleavage of the -Tyr-|-Leu- and -Tyr-|-Trp bonds also occurs).. Cleaves peptides in various proteins in a process that requires ATP hydrolysis. Has a chymotrypsin-like activity. Plays a major role in the degradation of misfolded proteins. This Campylobacter jejuni subsp. jejuni serotype O:6 (strain 81116 / NCTC 11828) protein is ATP-dependent Clp protease proteolytic subunit.